The sequence spans 360 residues: Glyceraldehyde-3-phosphate dehydrogenase (360 aa).

NAD(+) contacts are provided by residues 13–14, aspartate 35, and arginine 82; that span reads RI. D-glyceraldehyde 3-phosphate contacts are provided by residues 153–155, threonine 184, 213–214, and arginine 236; these read SCT and TG. Cysteine 154 functions as the Nucleophile in the catalytic mechanism. Position 318 (asparagine 318) interacts with NAD(+).

It belongs to the glyceraldehyde-3-phosphate dehydrogenase family. As to quaternary structure, homotetramer.

It carries out the reaction D-glyceraldehyde 3-phosphate + phosphate + NAD(+) = (2R)-3-phospho-glyceroyl phosphate + NADH + H(+). Its pathway is carbohydrate degradation; glycolysis; pyruvate from D-glyceraldehyde 3-phosphate: step 1/5. Its function is as follows. Key enzyme in glycolysis that catalyzes the first step of the pathway by converting D-glyceraldehyde 3-phosphate (G3P) into 3-phospho-D-glyceroyl phosphate. Essential for the maintenance of cellular ATP levels and carbohydrate metabolism. This Atriplex nummularia (Old man saltbush) protein is Glyceraldehyde-3-phosphate dehydrogenase.